Here is a 119-residue protein sequence, read N- to C-terminus: Large ribosomal subunit protein uL22 (119 aa).

The protein belongs to the universal ribosomal protein uL22 family. Part of the 50S ribosomal subunit.

This protein binds specifically to 23S rRNA; its binding is stimulated by other ribosomal proteins, e.g. L4, L17, and L20. It is important during the early stages of 50S assembly. It makes multiple contacts with different domains of the 23S rRNA in the assembled 50S subunit and ribosome. In terms of biological role, the globular domain of the protein is located near the polypeptide exit tunnel on the outside of the subunit, while an extended beta-hairpin is found that lines the wall of the exit tunnel in the center of the 70S ribosome. The sequence is that of Large ribosomal subunit protein uL22 from Rickettsia peacockii (strain Rustic).